A 132-amino-acid chain; its full sequence is Arsenate reductase 1 (132 aa).

Catalysis depends on nucleophile residues C10, C82, and C89. 2 disulfide bridges follow: C10–C82 and C82–C89.

It belongs to the low molecular weight phosphotyrosine protein phosphatase family. Thioredoxin-coupled ArsC subfamily.

It localises to the cytoplasm. It catalyses the reaction arsenate + [thioredoxin]-dithiol + H(+) = arsenite + [thioredoxin]-disulfide + H2O. Catalyzes the reduction of arsenate [As(V)] to arsenite [As(III)]. In Staphylococcus epidermidis (strain ATCC 35984 / DSM 28319 / BCRC 17069 / CCUG 31568 / BM 3577 / RP62A), this protein is Arsenate reductase 1.